A 482-amino-acid polypeptide reads, in one-letter code: Proline--tRNA ligase (482 aa).

This sequence belongs to the class-II aminoacyl-tRNA synthetase family. ProS type 3 subfamily. As to quaternary structure, homodimer.

It is found in the cytoplasm. It carries out the reaction tRNA(Pro) + L-proline + ATP = L-prolyl-tRNA(Pro) + AMP + diphosphate. Functionally, catalyzes the attachment of proline to tRNA(Pro) in a two-step reaction: proline is first activated by ATP to form Pro-AMP and then transferred to the acceptor end of tRNA(Pro). This is Proline--tRNA ligase from Thermofilum pendens (strain DSM 2475 / Hrk 5).